A 237-amino-acid polypeptide reads, in one-letter code: Terpene cyclase spyD (237 aa).

7 consecutive transmembrane segments (helical) span residues 17-37 (IYNV…IVTV), 47-67 (AIPL…VLVY), 71-91 (YLLF…IVYG), 109-129 (HLPL…YALA), 138-158 (IHGG…CQLL), 167-187 (SWTM…GEFL), and 206-226 (WCTG…WYMG).

Belongs to the paxB family.

The protein localises to the membrane. The enzyme catalyses (S)-(2E,6E,10E)-epoxygeranylgeranyl-triacetate lactone = sartorypyrone F. The catalysed reaction is (S)-(2E,6E,10E)-epoxygeranylgeranyl-triacetate lactone = sartorypyrone D. The protein operates within secondary metabolite biosynthesis; terpenoid biosynthesis. Terpene cyclase; part of the gene cluster that mediates the biosynthesis of meroterpenoids called sartorypyrones. Within the pathway, spyD catalyzes the cyclization of epoxygeranylgeranyl-triacetate lactone. SpyD exhibits promiscuous activity, resulting in the formation of bicyclic sartorypyrone F and monocyclic sartorypyrone D. The biosynthesis of sartorypyrones begins with the production of triacetic acid lactone (TAL) by the NR-PKS spyA using one molecule of acetyl-CoA and two molecules of malonyl-CoA. The prenyltransferase spyF then conjugates geranylgeranyl pyrophosphate (GGPP) to TAL to form geranylgeranyl-triacetate lactone, for which the pathway-specific geranylgeranyl pyrophosphate synthase (GGPS) spyE is required to provide GGPP. Subsequently, geranylgeranyl-triacetate lactone is epoxidized at the terminal olein by the FAD-dependent monooxygenase spyC, followed by cyclization of the terpenoid component catalyzed by the terpene cyclase spyD to produce both the bicyclic sartorypyrone F and the monocyclic sartorypyrone D. Finally, the last step of the biosynthesis involves the acetylation of the meroterpenoids sartorypyrones D and F by the acetyltransferase SpyB to produce sartorypyrones A and G, respectively. The protein is Terpene cyclase spyD of Aspergillus fumigatus (strain ATCC MYA-4609 / CBS 101355 / FGSC A1100 / Af293) (Neosartorya fumigata).